A 73-amino-acid polypeptide reads, in one-letter code: Translation initiation factor IF-1 1 (73 aa).

An S1-like domain is found at 1–72 (MAKEELIEFG…TKGRINFRHK (72 aa)).

It belongs to the IF-1 family. In terms of assembly, component of the 30S ribosomal translation pre-initiation complex which assembles on the 30S ribosome in the order IF-2 and IF-3, IF-1 and N-formylmethionyl-tRNA(fMet); mRNA recruitment can occur at any time during PIC assembly.

The protein resides in the cytoplasm. Functionally, one of the essential components for the initiation of protein synthesis. Stabilizes the binding of IF-2 and IF-3 on the 30S subunit to which N-formylmethionyl-tRNA(fMet) subsequently binds. Helps modulate mRNA selection, yielding the 30S pre-initiation complex (PIC). Upon addition of the 50S ribosomal subunit IF-1, IF-2 and IF-3 are released leaving the mature 70S translation initiation complex. The sequence is that of Translation initiation factor IF-1 1 from Cupriavidus pinatubonensis (strain JMP 134 / LMG 1197) (Cupriavidus necator (strain JMP 134)).